Here is a 126-residue protein sequence, read N- to C-terminus: FCS-Like Zinc finger 17 (126 aa).

The FLZ-type zinc-finger motif lies at Cys41–Glu85.

Belongs to the FLZ family. In terms of assembly, interacts with KIN10 and KIN11 via its FLZ-type zinc finger domain. Forms heterodimer with FLZ2 in vitro.

The protein localises to the nucleus. Its subcellular location is the cytoplasm. In terms of biological role, may act as an adapter to facilitate the interaction of SnRK1 complex with effector proteins, conferring tissue- and stimulus-type specific differences in the SnRK1 regulation pathway. The sequence is that of FCS-Like Zinc finger 17 from Arabidopsis thaliana (Mouse-ear cress).